We begin with the raw amino-acid sequence, 452 residues long: Membrane-bound lytic murein transglycosylase D (452 aa).

Residues M1–G15 form the signal peptide. C16 is lipidated: N-palmitoyl cysteine. C16 carries the S-diacylglycerol cysteine lipid modification. Residues N113 to G198 are slt-type domain. The active site involves E125. LysM domains lie at R341–I384 and I400–N448.

The protein belongs to the transglycosylase Slt family.

The protein localises to the cell membrane. It carries out the reaction Exolytic cleavage of the (1-&gt;4)-beta-glycosidic linkage between N-acetylmuramic acid (MurNAc) and N-acetylglucosamine (GlcNAc) residues in peptidoglycan, from either the reducing or the non-reducing ends of the peptidoglycan chains, with concomitant formation of a 1,6-anhydrobond in the MurNAc residue.. Functionally, murein-degrading enzyme. May play a role in recycling of muropeptides during cell elongation and/or cell division. The chain is Membrane-bound lytic murein transglycosylase D (mltD) from Escherichia coli O6:H1 (strain CFT073 / ATCC 700928 / UPEC).